The primary structure comprises 403 residues: Endophilin-B2 (403 aa).

A membrane-binding amphipathic helix region spans residues 1 to 27; sequence MDFNVKKLASDAGVFFSRAMQFTEEKL. The 264-residue stretch at 24-287 folds into the BAR domain; the sequence is EEKLGQAEKT…LGRFSGTFVG (264 aa). Residues 210-233 adopt a coiled-coil conformation; the sequence is WSDEVEKAEHELRLTQTEFDRQAE. An SH3 domain is found at 343–403; that stretch reads SGTRKARVLY…VPVTYLELLS (61 aa).

This sequence belongs to the endophilin family. Homodimer, and heterodimer with SH3GLB1.

The protein localises to the cytoplasm. The protein is Endophilin-B2 of Gallus gallus (Chicken).